Here is a 613-residue protein sequence, read N- to C-terminus: Dihydroxy-acid dehydratase (613 aa).

Aspartate 81 provides a ligand contact to Mg(2+). Cysteine 122 lines the [2Fe-2S] cluster pocket. Residues aspartate 123 and lysine 124 each coordinate Mg(2+). Residue lysine 124 is modified to N6-carboxylysine. Cysteine 195 contributes to the [2Fe-2S] cluster binding site. Mg(2+) is bound at residue glutamate 491. Catalysis depends on serine 517, which acts as the Proton acceptor.

Belongs to the IlvD/Edd family. Homodimer. The cofactor is [2Fe-2S] cluster. Mg(2+) serves as cofactor.

The catalysed reaction is (2R)-2,3-dihydroxy-3-methylbutanoate = 3-methyl-2-oxobutanoate + H2O. It catalyses the reaction (2R,3R)-2,3-dihydroxy-3-methylpentanoate = (S)-3-methyl-2-oxopentanoate + H2O. Its pathway is amino-acid biosynthesis; L-isoleucine biosynthesis; L-isoleucine from 2-oxobutanoate: step 3/4. It participates in amino-acid biosynthesis; L-valine biosynthesis; L-valine from pyruvate: step 3/4. Functionally, functions in the biosynthesis of branched-chain amino acids. Catalyzes the dehydration of (2R,3R)-2,3-dihydroxy-3-methylpentanoate (2,3-dihydroxy-3-methylvalerate) into 2-oxo-3-methylpentanoate (2-oxo-3-methylvalerate) and of (2R)-2,3-dihydroxy-3-methylbutanoate (2,3-dihydroxyisovalerate) into 2-oxo-3-methylbutanoate (2-oxoisovalerate), the penultimate precursor to L-isoleucine and L-valine, respectively. The chain is Dihydroxy-acid dehydratase from Vibrio vulnificus (strain YJ016).